Here is a 368-residue protein sequence, read N- to C-terminus: Cytochrome b (368 aa).

4 helical membrane passes run 25-45 (FGSM…FLAM), 69-90 (WIMQ…YIHI), 105-125 (WLSG…GYVL), and 170-190 (FFAL…IHII). Positions 75 and 89 each coordinate heme b. The heme b site is built by H174 and H188. H193 lines the a ubiquinone pocket. Transmembrane regions (helical) follow at residues 218-238 (YKDM…MSFT), 280-300 (LGGT…PFTH), 312-332 (LTQT…WTAT), and 339-358 (FIFI…IINP).

It belongs to the cytochrome b family. As to quaternary structure, the cytochrome bc1 complex contains 3 respiratory subunits (MT-CYB, CYC1 and UQCRFS1), 2 core proteins (UQCRC1 and UQCRC2) and probably 6 low-molecular weight proteins. The cofactor is heme b.

The protein localises to the mitochondrion inner membrane. Its function is as follows. Component of the ubiquinol-cytochrome c reductase complex (complex III or cytochrome b-c1 complex) that is part of the mitochondrial respiratory chain. The b-c1 complex mediates electron transfer from ubiquinol to cytochrome c. Contributes to the generation of a proton gradient across the mitochondrial membrane that is then used for ATP synthesis. This chain is Cytochrome b (MT-CYB), found in Notechis ater (Black tiger snake).